Reading from the N-terminus, the 500-residue chain is Cytochrome P450 11B2, mitochondrial (500 aa).

The N-terminal 24 residues, 1–24, are a transit peptide targeting the mitochondrion; the sequence is MALRAKADVWLARPWQCLPRTRAL. Phe381 serves as a coordination point for 21-hydroxyprogesterone. Cys447 provides a ligand contact to heme.

This sequence belongs to the cytochrome P450 family. It depends on heme as a cofactor. Adrenal gland.

Its subcellular location is the mitochondrion inner membrane. It catalyses the reaction a steroid + 2 reduced [adrenodoxin] + O2 + 2 H(+) = an 11beta-hydroxysteroid + 2 oxidized [adrenodoxin] + H2O. It carries out the reaction 21-hydroxyprogesterone + 2 reduced [adrenodoxin] + O2 + 2 H(+) = corticosterone + 2 oxidized [adrenodoxin] + H2O. The catalysed reaction is corticosterone + 2 reduced [adrenodoxin] + O2 + 2 H(+) = 18-hydroxycorticosterone + 2 oxidized [adrenodoxin] + H2O. The enzyme catalyses 18-hydroxycorticosterone + 2 reduced [adrenodoxin] + O2 + 2 H(+) = aldosterone + 2 oxidized [adrenodoxin] + 2 H2O. It catalyses the reaction 11-deoxycortisol + 2 reduced [adrenodoxin] + O2 + 2 H(+) = cortisol + 2 oxidized [adrenodoxin] + H2O. It carries out the reaction 21-hydroxyprogesterone + 2 reduced [adrenodoxin] + O2 + 2 H(+) = 18-hydroxy-11-deoxycorticosterone + 2 oxidized [adrenodoxin] + H2O. The catalysed reaction is cortisol + 2 reduced [adrenodoxin] + O2 + 2 H(+) = 18-hydroxycortisol + 2 oxidized [adrenodoxin] + H2O. The enzyme catalyses 18-hydroxycortisol + 2 reduced [adrenodoxin] + O2 + 2 H(+) = 18-oxocortisol + 2 oxidized [adrenodoxin] + 2 H2O. It participates in steroid biosynthesis. A cytochrome P450 monooxygenase that catalyzes the biosynthesis of aldosterone, the main mineralocorticoid in the human body responsible for salt and water homeostasis, thus involved in blood pressure regulation, arterial hypertension, and the development of heart failure. Catalyzes three sequential oxidative reactions of 11-deoxycorticosterone (21-hydroxyprogesterone), namely 11-beta hydroxylation, followed by two successive oxidations at C18 yielding 18-hydroxy and then 18-oxo intermediates (that would not leave the enzyme active site during the consecutive hydroxylation reactions), ending with the formation of aldosterone. Can also produce 18-hydroxycortisol and 18-oxocortisol, derived from successive oxidations of cortisol at C18, normally found at very low levels, but significantly increased in primary aldosteronism, the most common form of secondary hypertension. Mechanistically, uses molecular oxygen inserting one oxygen atom into a substrate and reducing the second into a water molecule. Two electrons are provided by NADPH via a two-protein mitochondrial transfer system comprising flavoprotein FDXR (adrenodoxin/ferredoxin reductase) and nonheme iron-sulfur protein FDX1 or FDX2 (adrenodoxin/ferredoxin). Could also be involved in the androgen metabolic pathway. In Mesocricetus auratus (Golden hamster), this protein is Cytochrome P450 11B2, mitochondrial (CYP11B2).